The sequence spans 387 residues: Eukaryotic translation initiation factor 3 subunit M (387 aa).

One can recognise a PCI domain in the interval 181-340; the sequence is LSSKVMIELL…RKVHISSTMH (160 aa).

This sequence belongs to the eIF-3 subunit M family. Component of the eukaryotic translation initiation factor 3 (eIF-3) complex. The eIF-3 complex interacts with pix.

The protein resides in the cytoplasm. Its subcellular location is the golgi apparatus. In terms of biological role, component of the eukaryotic translation initiation factor 3 (eIF-3) complex, which is involved in protein synthesis of a specialized repertoire of mRNAs and, together with other initiation factors, stimulates binding of mRNA and methionyl-tRNAi to the 40S ribosome. The eIF-3 complex specifically targets and initiates translation of a subset of mRNAs involved in cell proliferation. The sequence is that of Eukaryotic translation initiation factor 3 subunit M from Drosophila ananassae (Fruit fly).